The following is a 467-amino-acid chain: UDP-N-acetylmuramoylalanine--D-glutamate ligase (467 aa).

118–124 (GTNGKTT) provides a ligand contact to ATP.

This sequence belongs to the MurCDEF family.

It localises to the cytoplasm. The catalysed reaction is UDP-N-acetyl-alpha-D-muramoyl-L-alanine + D-glutamate + ATP = UDP-N-acetyl-alpha-D-muramoyl-L-alanyl-D-glutamate + ADP + phosphate + H(+). Its pathway is cell wall biogenesis; peptidoglycan biosynthesis. Cell wall formation. Catalyzes the addition of glutamate to the nucleotide precursor UDP-N-acetylmuramoyl-L-alanine (UMA). The sequence is that of UDP-N-acetylmuramoylalanine--D-glutamate ligase from Streptomyces avermitilis (strain ATCC 31267 / DSM 46492 / JCM 5070 / NBRC 14893 / NCIMB 12804 / NRRL 8165 / MA-4680).